The sequence spans 111 residues: Kalata-B7 (111 aa).

The N-terminal stretch at 1-28 (MAKFTNCLALCLLLAAVVGAFGVELSEA) is a signal peptide. The propeptide occupies 29 to 75 (DKSAVVNEIAEKMALQEMLDGVDKLFLRKMKSSETTLTMFLKEMQLK). Positions 76–104 (GLPVCGETCTLGTCYTQGCTCSWPICKRN) form a cross-link, cyclopeptide (Gly-Asn). 3 disulfide bridges follow: cysteine 80/cysteine 94, cysteine 84/cysteine 96, and cysteine 89/cysteine 101. Positions 105-111 (GLPDVAA) are excised as a propeptide.

In terms of processing, kalata-B7 is a cyclic peptide.

Functionally, probably participates in a plant defense mechanism. Has hemolytic activity. The sequence is that of Kalata-B7 (OAK3) from Oldenlandia affinis.